The sequence spans 284 residues: uncharacterized protein (284 aa).

This sequence to E.coli YnjA.

This is an uncharacterized protein from Mycobacterium tuberculosis (strain CDC 1551 / Oshkosh).